The primary structure comprises 453 residues: uncharacterized protein (453 aa).

Disordered regions lie at residues 15-42 (LKRK…SETM) and 425-453 (TNEI…RHAK). Residues 425-437 (TNEISSSNNSGTA) are compositionally biased toward polar residues. The span at 443–453 (QNRKRNRRHAK) shows a compositional bias: basic residues.

This is an uncharacterized protein from Caenorhabditis elegans.